The following is a 172-amino-acid chain: uncharacterized protein (172 aa).

Positions lysine 3 to glutamate 171 constitute a PfpI endopeptidase domain.

The protein belongs to the peptidase C56 family.

This is an uncharacterized protein from Staphylococcus epidermidis (strain ATCC 35984 / DSM 28319 / BCRC 17069 / CCUG 31568 / BM 3577 / RP62A).